We begin with the raw amino-acid sequence, 485 residues long: Pelle-like serine/threonine-protein kinase pik-1 (485 aa).

Residues 115-132 (TSRVSKQMVQPPGSQSAS) are compositionally biased toward polar residues. A disordered region spans residues 115–155 (TSRVSKQMVQPPGSQSASRLKKTEIKESSPSPAAAAASQLS). Residues 142–152 (SSPSPAAAAAS) show a composition bias toward low complexity. A Protein kinase domain is found at 185–485 (FAVSNVIGKG…LCKNSIPPVV (301 aa)). ATP is bound by residues 191–199 (IGKGGYGTV) and K214. D318 functions as the Proton acceptor in the catalytic mechanism.

Belongs to the protein kinase superfamily. TKL Ser/Thr protein kinase family. Pelle subfamily. In terms of assembly, interacts with actl-1. As to expression, expressed in the nervous system.

The enzyme catalyses L-seryl-[protein] + ATP = O-phospho-L-seryl-[protein] + ADP + H(+). It carries out the reaction L-threonyl-[protein] + ATP = O-phospho-L-threonyl-[protein] + ADP + H(+). Functionally, through association with the adapter actl-1, may act downstream of the receptor complex composed of ilcr-1 and ilcr-2, which is a signaling complex that modulates neuronal activity and animal behavior in response to sensory neuron input. The sequence is that of Pelle-like serine/threonine-protein kinase pik-1 from Caenorhabditis elegans.